Reading from the N-terminus, the 132-residue chain is Arsenate reductase 1 (132 aa).

Active-site nucleophile residues include Cys10, Cys82, and Cys89. Disulfide bonds link Cys10–Cys82 and Cys82–Cys89.

The protein belongs to the low molecular weight phosphotyrosine protein phosphatase family. Thioredoxin-coupled ArsC subfamily.

The protein localises to the cytoplasm. The enzyme catalyses arsenate + [thioredoxin]-dithiol + H(+) = arsenite + [thioredoxin]-disulfide + H2O. Functionally, catalyzes the reduction of arsenate [As(V)] to arsenite [As(III)]. This Staphylococcus epidermidis (strain ATCC 35984 / DSM 28319 / BCRC 17069 / CCUG 31568 / BM 3577 / RP62A) protein is Arsenate reductase 1.